The primary structure comprises 199 residues: Chaperone protein TorD (199 aa).

The protein belongs to the TorD/DmsD family. TorD subfamily.

Its subcellular location is the cytoplasm. Involved in the biogenesis of TorA. Acts on TorA before the insertion of the molybdenum cofactor and, as a result, probably favors a conformation of the apoenzyme that is competent for acquiring the cofactor. This chain is Chaperone protein TorD, found in Escherichia coli O139:H28 (strain E24377A / ETEC).